A 141-amino-acid chain; its full sequence is MAIERTLSIVKPDAVAKNVIGKIYDRFESNGLKIVAAKMKHLSRREAEGFYAVHKERPFFNDLVEFMISGPVMVQVLEGENAVLKNRELMGATDPKKADAGTIRADFAESIDANAVHGSDSLENAAIEIAYFFSATEVCPR.

Residues K11, F59, R87, T93, R104, and N114 each coordinate ATP. H117 functions as the Pros-phosphohistidine intermediate in the catalytic mechanism.

The protein belongs to the NDK family. In terms of assembly, homotetramer. Requires Mg(2+) as cofactor.

It is found in the cytoplasm. The enzyme catalyses a 2'-deoxyribonucleoside 5'-diphosphate + ATP = a 2'-deoxyribonucleoside 5'-triphosphate + ADP. The catalysed reaction is a ribonucleoside 5'-diphosphate + ATP = a ribonucleoside 5'-triphosphate + ADP. Major role in the synthesis of nucleoside triphosphates other than ATP. The ATP gamma phosphate is transferred to the NDP beta phosphate via a ping-pong mechanism, using a phosphorylated active-site intermediate. In Laribacter hongkongensis (strain HLHK9), this protein is Nucleoside diphosphate kinase.